Reading from the N-terminus, the 102-residue chain is Large ribosomal subunit protein uL24 (102 aa).

The protein belongs to the universal ribosomal protein uL24 family. As to quaternary structure, part of the 50S ribosomal subunit.

In terms of biological role, one of two assembly initiator proteins, it binds directly to the 5'-end of the 23S rRNA, where it nucleates assembly of the 50S subunit. Functionally, one of the proteins that surrounds the polypeptide exit tunnel on the outside of the subunit. The protein is Large ribosomal subunit protein uL24 of Limosilactobacillus reuteri (strain DSM 20016) (Lactobacillus reuteri).